The sequence spans 540 residues: Calnexin homolog (540 aa).

Residues 1–29 (MELSRRKMCCYIQFCCFVLIGCFISQICA) form the signal peptide. Residues 30–469 (SSDAIFYESF…EKAETQPNIT (440 aa)) are Lumenal-facing. Ca(2+) contacts are provided by Ser38 and Asp69. Cys112 and Cys147 form a disulfide bridge. Tyr116, Lys118, Tyr138, and Asp145 together coordinate an alpha-D-glucoside. Residues 221–301 (LIPTKTIPDP…DWDDEEDGEW (81 aa)) are disordered. A p domain (Extended arm) region spans residues 227–360 (IPDPDDKKPE…REIPNPDYFE (134 aa)). Residues 228–253 (PDPDDKKPEDWDERAKIPDPEATKPD) show a composition bias toward basic and acidic residues. 5 consecutive repeat copies span residues 229–240 (DPDDKKPEDWDE), 246–257 (DPEATKPDDWDE), 265–276 (DEEAEKPEGWLD), 284–295 (DPEAVKPEDWDD), and 299–309 (GEWEAPQIENP). 2 4 X approximate repeats regions span residues 229-295 (DPDD…DWDD) and 299-356 (GEWE…IPNP). Composition is skewed to acidic residues over residues 254-285 (DWDE…IDDP) and 292-301 (DWDDEEDGEW). A disulfide bond links Cys311 and Cys317. 3 consecutive repeat copies span residues 318–328 (GEWRRPLKRNP), 332–342 (GKWHAPLIDNP), and 346–356 (GIWKPREIPNP). Position 375 (Glu375) interacts with an alpha-D-glucoside. Residue Asp386 coordinates Ca(2+). An N-linked (GlcNAc...) asparagine glycan is attached at Asn467. A helical transmembrane segment spans residues 470–490 (IGVIVSIIVVIFSILLKLLFG). At 491-540 (GKKAAPKVNVVPKKKEEPEASNTAEVREGEEEKTEGEVAAAPRRRPRRDT) the chain is on the cytoplasmic side. The interval 499–540 (NVVPKKKEEPEASNTAEVREGEEEKTEGEVAAAPRRRPRRDT) is disordered.

Belongs to the calreticulin family.

Its subcellular location is the endoplasmic reticulum membrane. Its function is as follows. Calcium-binding protein that interacts with newly synthesized monoglucosylated glycoproteins in the endoplasmic reticulum. It may act in assisting protein assembly and/or in the retention within the ER of unassembled protein subunits. It seems to play a major role in the quality control apparatus of the ER by the retention of incorrectly folded proteins. This is Calnexin homolog from Helianthus tuberosus (Jerusalem artichoke).